The chain runs to 211 residues: CASP-like protein 1B1 (211 aa).

The interval 1–29 (MDLERGSKTPPSSAPAAAAATTTTSTCCS) is disordered. At 1–55 (MDLERGSKTPPSSAPAAAAATTTTSTCCSNKRPQLRDRLVALQPVVLRAAATLAT) the chain is on the cytoplasmic side. The span at 9 to 26 (TPPSSAPAAAAATTTTST) shows a compositional bias: low complexity. The helical transmembrane segment at 56–76 (AVAAAVMALNAQSYTAVVAIV) threads the bilayer. At 77-94 (GTRPLTQTFTTKFRDTPA) the chain is on the extracellular side. Residues 95–115 (FVYFVIANAIAAVYNLVMLLF) traverse the membrane as a helical segment. Residues 116-123 (RCLILRRR) lie on the Cytoplasmic side of the membrane. Residues 124–144 (MAGLVVHMLDMVIMALLATGA) form a helical membrane-spanning segment. Topologically, residues 145–176 (ATAAAMAELGKNGNVHARWNPICDRFGSFCSR) are extracellular. Residues 177–197 (GGVALASSFTGVALMLALNLL) form a helical membrane-spanning segment. Topologically, residues 198-211 (SAASNAQCSPGQYE) are cytoplasmic.

This sequence belongs to the Casparian strip membrane proteins (CASP) family. Homodimer and heterodimers.

The protein localises to the cell membrane. The sequence is that of CASP-like protein 1B1 from Sorghum bicolor (Sorghum).